Consider the following 1057-residue polypeptide: MAGNDWINSYLEAILDVGPGLDDAKSSLLLRERGRFSPTRYFVEEVITGFDETDLHRSWVKAQATRSPQERNTRLENMCWRIWNLARQKKQLEGEAAQRMAKRRLERERGRREATADMSEDLSEGEKGDIVSDVSAHGDSTRSRLPRISSVDAMETWISQQKGKKLYIVLISIHGLIRGENMELGRDSDTGGQVKYVVELARALGSMPGVYRVDLLTRQVSAPDVDWSYGEPTEMLTPRNSDDFMDDMGESSGAYIIRIPFGPKDKYIAKELLWPHIPEFVDGALNHIIRMSNVLGEQIGGGKPVWPVAIHGHYADAGDSAALLSGALNVPMLFTGHSLGRDKLEQLLKQARLSRDEINATYKIMRRIEAEELSLDASEIVITSTRQEIEEQWRLYDGFDPVLERKLRARIKRNVSCYGKFMPRMAIIPPGMEFHHIVPQDGDMDGETEGNEDNPASPDPPIWSEIMRFFTNPRKPVILALARPDPKKNITTLVKAFGECRPLRELANLTLIMGNRDGIDEMSSTSASVLLSVLKLIDKYDLYGQVAYPKHHKQSDVPEIYRLAAKTKGVFINPAFIEPFGLTLIEAAAHGLPIVATKNGGPVDIHRVLDNGLLVDPHDQQSIADALLKLVAGKQLWARCRQNGLKNIHLFSWPEHCKTYLSRIAGCKPRHPQWQRTDDGGETSESDSPGDSLRDIQDISLNLKFSLDGEKSGASGNDDSLDSEGNVADRKSRLENAVLAWSKGVLKDTRKSGSTDKVDQNTGAAKFPALRRRKHIFVISVDCDSTTGLLDATKKICEAVEKERTEGSIGFILSTSMTISEIHSFLVSGHLSPSDFDAFICNSGSDLYYSTLNSEDGPFVVDFYYHSHIEYRWGGEGLRKTLVRWASQVTDKKAESGEKVLTPAEQLSTNYCYAFSVQKPGMTPPVKELRKVLRIQALRCHVIYCQNGSRVNVIPVLASRSQALRYLYLRWGVELSKMVVFVGESGDTDYEGLLGGVHKTVILKGICSSSSNQIHANRSYPLSDVMPIDSPNIVQTPEDCTTSDIRSSLEQLGLLKV.

Residues 103 to 115 show a composition bias toward basic and acidic residues; it reads RRLERERGRREAT. 3 disordered regions span residues 103–143, 439–459, and 670–693; these read RRLE…STRS, PQDG…ASPD, and RHPQ…GDSL. The segment covering 442 to 452 has biased composition (acidic residues); the sequence is GDMDGETEGNE.

Belongs to the glycosyltransferase 1 family. In terms of assembly, homodimer or homotetramer.

The enzyme catalyses beta-D-fructose 6-phosphate + UDP-alpha-D-glucose = sucrose 6(F)-phosphate + UDP + H(+). It functions in the pathway glycan biosynthesis; sucrose biosynthesis; sucrose from D-fructose 6-phosphate and UDP-alpha-D-glucose: step 1/2. With respect to regulation, activity is regulated by phosphorylation and moderated by concentration of metabolites and light. Its function is as follows. Plays a role in photosynthetic sucrose synthesis by catalyzing the rate-limiting step of sucrose biosynthesis from UDP-glucose and fructose- 6-phosphate. Involved in the regulation of carbon partitioning in the leaves of plants. May regulate the synthesis of sucrose and therefore play a major role as a limiting factor in the export of photoassimilates out of the leaf. Plays a role for sucrose availability that is essential for plant growth and fiber elongation. In Citrus unshiu (Satsuma mandarin), this protein is Probable sucrose-phosphate synthase 1 (SPS1).